The following is a 272-amino-acid chain: NH(3)-dependent NAD(+) synthetase (272 aa).

45–52 (GISGGQDS) contributes to the ATP binding site. Asp51 contributes to the Mg(2+) binding site. Arg138 is a deamido-NAD(+) binding site. An ATP-binding site is contributed by Thr158. Glu163 is a binding site for Mg(2+). 2 residues coordinate deamido-NAD(+): Lys171 and Asp178. Residues Lys187 and Thr209 each coordinate ATP. A deamido-NAD(+)-binding site is contributed by 258 to 259 (HK).

Belongs to the NAD synthetase family. In terms of assembly, homodimer.

The enzyme catalyses deamido-NAD(+) + NH4(+) + ATP = AMP + diphosphate + NAD(+) + H(+). Its pathway is cofactor biosynthesis; NAD(+) biosynthesis; NAD(+) from deamido-NAD(+) (ammonia route): step 1/1. Catalyzes the ATP-dependent amidation of deamido-NAD to form NAD. Uses ammonia as a nitrogen source. The chain is NH(3)-dependent NAD(+) synthetase from Bacillus thuringiensis subsp. konkukian (strain 97-27).